Here is a 236-residue protein sequence, read N- to C-terminus: RNA-binding protein 24 (236 aa).

The RRM domain maps to Thr-11–Leu-88. Positions Gln-175–Gln-199 are necessary for interaction with EIF4E.

In terms of assembly, interacts with EIF4E; this interaction prevents EIF4E from binding to p53/TP53 mRNA and inhibits the assembly of translation initiation complex. Expressed strongly in heart and skeletal muscles. Weakly expressed in intestine, aorta, liver, lung, kidney, uterus and bladder.

It localises to the nucleus. The protein localises to the cytoplasm. Its function is as follows. Multifunctional RNA-binding protein involved in the regulation of pre-mRNA splicing, mRNA stability and mRNA translation important for cell fate decision and differentiation. Plays a major role in pre-mRNA alternative splicing regulation. Mediates preferentially muscle-specific exon inclusion in numerous mRNAs important for striated cardiac and skeletal muscle cell differentiation. Binds to intronic splicing enhancer (ISE) composed of stretches of GU-rich motifs localized in flanking intron of exon that will be included by alternative splicing. Involved in embryonic stem cell (ESC) transition to cardiac cell differentiation by promoting pre-mRNA alternative splicing events of several pluripotency and/or differentiation genes. Plays a role in the regulation of mRNA stability. Binds to 3'-untranslated region (UTR) AU-rich elements in target transcripts, such as CDKN1A and MYOG, leading to maintain their stabilities. Involved in myogenic differentiation by regulating MYOG levels. Binds to multiple regions in the mRNA 3'-UTR of TP63, hence inducing its destabilization. Also promotes the destabilization of the CHRM2 mRNA via its binding to a region in the coding sequence. Plays a role in the regulation of mRNA translation. Mediates repression of p53/TP53 mRNA translation through its binding to U-rich element in the 3'-UTR, hence preventing EIF4E from binding to p53/TP53 mRNA and translation initiation. Binds to a huge amount of mRNAs. Required for embryonic heart development, sarcomer and M-band formation in striated muscles. Together with RBM20, promotes the expression of short isoforms of PDLIM5/ENH in cardiomyocytes. The sequence is that of RNA-binding protein 24 from Mus musculus (Mouse).